A 509-amino-acid polypeptide reads, in one-letter code: Cytochrome P450 monooxygenase aba1 (509 aa).

An N-terminal signal peptide occupies residues 1–31 (MSNSILNLGSFACLLSLGSIVLWYTISAVLA). N-linked (GlcNAc...) asparagine glycosylation occurs at asparagine 402. Cysteine 451 is a binding site for heme. Asparagine 462 is a glycosylation site (N-linked (GlcNAc...) asparagine).

The protein belongs to the cytochrome P450 family. Requires heme as cofactor.

It functions in the pathway hormone biosynthesis. In terms of biological role, cytochrome P450 monooxygenase; part of the gene cluster that mediates the biosynthesis of abscisic acid (ABA), a phytohormone that acts antagonistically toward salicylic acid (SA), jasmonic acid (JA) and ethylene (ETH) signaling, to impede plant defense responses. The first step of the pathway catalyzes the reaction from farnesyl diphosphate to alpha-ionylideneethane performed by the alpha-ionylideneethane synthase aba3 via a three-step reaction mechanism involving 2 neutral intermediates, beta-farnesene and allofarnesene. The cytochrome P450 monooxygenase aba1 might then be involved in the conversion of alpha-ionylideneethane to alpha-ionylideneacetic acid. Alpha-ionylideneacetic acid is further converted to abscisic acid in 2 steps involving the cytochrome P450 monooxygenase aba2 and the short-chain dehydrogenase/reductase aba4, via the intermediates 1'-deoxy-ABA or 1',4'-trans-diol-ABA, depending on the order of action of these 2 enzymes. Aba2 is responsible for the hydroxylation of carbon atom C-1' and aba4 might be involved in the oxidation of the C-4' carbon atom. This chain is Cytochrome P450 monooxygenase aba1 (aba1), found in Botryotinia fuckeliana (strain B05.10) (Noble rot fungus).